We begin with the raw amino-acid sequence, 1155 residues long: ATP-dependent helicase/deoxyribonuclease subunit B (1155 aa).

Positions 1–300 (MSLRFIVGRA…AHLEKYYFRH (300 aa)) constitute a UvrD-like helicase ATP-binding domain. 8 to 15 (GRAGSGKS) contacts ATP. One can recognise a UvrD-like helicase C-terminal domain in the interval 280–590 (TPVRFQKDSA…VVGTLERSRN (311 aa)). [4Fe-4S] cluster contacts are provided by cysteine 792, cysteine 1111, cysteine 1114, and cysteine 1120.

The protein belongs to the helicase family. AddB/RexB type 1 subfamily. As to quaternary structure, heterodimer of AddA and AddB. Mg(2+) serves as cofactor. It depends on [4Fe-4S] cluster as a cofactor.

In terms of biological role, the heterodimer acts as both an ATP-dependent DNA helicase and an ATP-dependent, dual-direction single-stranded exonuclease. Recognizes the chi site generating a DNA molecule suitable for the initiation of homologous recombination. The AddB subunit has 5' -&gt; 3' nuclease activity but not helicase activity. The chain is ATP-dependent helicase/deoxyribonuclease subunit B from Desulforamulus reducens (strain ATCC BAA-1160 / DSM 100696 / MI-1) (Desulfotomaculum reducens).